The chain runs to 365 residues: Peptide chain release factor 2 (365 aa).

At glutamine 252 the chain carries N5-methylglutamine.

It belongs to the prokaryotic/mitochondrial release factor family. In terms of processing, methylated by PrmC. Methylation increases the termination efficiency of RF2.

It is found in the cytoplasm. Functionally, peptide chain release factor 2 directs the termination of translation in response to the peptide chain termination codons UGA and UAA. The polypeptide is Peptide chain release factor 2 (Proteus mirabilis (strain HI4320)).